A 119-amino-acid polypeptide reads, in one-letter code: Odin profilin (119 aa).

Belongs to the Asgard profilin family.

It localises to the cytoplasm. Its subcellular location is the cytoskeleton. Inhibition of rabbit actin polymerization is reduced by phosphatidylinositol-(4,5)-P2(1,2-dipalmitoyl), a soluble form of the phospholipid phosphatidylinositol, suggesting an unknown lipid might regulate actin-profilin interaction in vivo. In terms of biological role, binds to actin and affects the structure of the cytoskeleton. At high concentrations inhibits spontaneous rabbit actin nucleation. This strongly suggests this archaea has a profilin-regulated actin system, and actin-type genes can be identified in this organism. The protein is Odin profilin of Odinarchaeota yellowstonii (strain LCB_4).